We begin with the raw amino-acid sequence, 249 residues long: ATP synthase subunit a (249 aa).

6 helical membrane passes run 30–50, 84–104, 114–134, 143–163, 193–213, and 220–240; these read SLYM…GSAG, FFPL…IGVI, LIVT…YGLY, VFVP…IEVI, FVTS…LPLA, and ILEV…TCIY.

Belongs to the ATPase A chain family. In terms of assembly, F-type ATPases have 2 components, CF(1) - the catalytic core - and CF(0) - the membrane proton channel. CF(1) has five subunits: alpha(3), beta(3), gamma(1), delta(1), epsilon(1). CF(0) has three main subunits: a(1), b(2) and c(9-12). The alpha and beta chains form an alternating ring which encloses part of the gamma chain. CF(1) is attached to CF(0) by a central stalk formed by the gamma and epsilon chains, while a peripheral stalk is formed by the delta and b chains.

Its subcellular location is the cell inner membrane. Key component of the proton channel; it plays a direct role in the translocation of protons across the membrane. This is ATP synthase subunit a from Afipia carboxidovorans (strain ATCC 49405 / DSM 1227 / KCTC 32145 / OM5) (Oligotropha carboxidovorans).